A 384-amino-acid chain; its full sequence is S-adenosylmethionine synthase (384 aa).

His-15 serves as a coordination point for ATP. Asp-17 is a Mg(2+) binding site. A K(+)-binding site is contributed by Glu-43. Positions 56 and 99 each coordinate L-methionine. Residues 99–109 (QSPDINQGVDR) form a flexible loop region. ATP-binding positions include 164 to 166 (DAK), 230 to 231 (RF), Asp-239, 245 to 246 (RK), Ala-262, and Lys-266. Asp-239 is a binding site for L-methionine. Position 270 (Lys-270) interacts with L-methionine.

It belongs to the AdoMet synthase family. In terms of assembly, homotetramer; dimer of dimers. Mg(2+) serves as cofactor. It depends on K(+) as a cofactor.

It localises to the cytoplasm. It carries out the reaction L-methionine + ATP + H2O = S-adenosyl-L-methionine + phosphate + diphosphate. It functions in the pathway amino-acid biosynthesis; S-adenosyl-L-methionine biosynthesis; S-adenosyl-L-methionine from L-methionine: step 1/1. Its function is as follows. Catalyzes the formation of S-adenosylmethionine (AdoMet) from methionine and ATP. The overall synthetic reaction is composed of two sequential steps, AdoMet formation and the subsequent tripolyphosphate hydrolysis which occurs prior to release of AdoMet from the enzyme. This is S-adenosylmethionine synthase from Yersinia enterocolitica serotype O:8 / biotype 1B (strain NCTC 13174 / 8081).